The primary structure comprises 350 residues: Ion-translocating oxidoreductase complex subunit D (350 aa).

A run of 5 helical transmembrane segments spans residues 20-40 (IMML…WFFG), 42-62 (GTLF…AAVL), 68-88 (PIAA…LAVS), 89-109 (IPPL…VIIA), and 123-143 (PAMI…TSWL). Thr187 bears the FMN phosphoryl threonine mark. 5 consecutive transmembrane segments (helical) span residues 215-235 (LAGA…VWLL), 244-264 (IPVS…AFAG), 267-287 (LASP…FFIL), 301-321 (LIFG…GGYP), and 322-342 (DGVA…DYYT).

This sequence belongs to the NqrB/RnfD family. In terms of assembly, the complex is composed of six subunits: RnfA, RnfB, RnfC, RnfD, RnfE and RnfG. FMN serves as cofactor.

Its subcellular location is the cell inner membrane. Functionally, part of a membrane-bound complex that couples electron transfer with translocation of ions across the membrane. In Citrobacter koseri (strain ATCC BAA-895 / CDC 4225-83 / SGSC4696), this protein is Ion-translocating oxidoreductase complex subunit D.